A 127-amino-acid chain; its full sequence is Fluoride-specific ion channel FluC (127 aa).

A run of 4 helical transmembrane segments spans residues 4 to 24 (IMLA…WLGL), 35 to 55 (VGTL…LAWF), 71 to 91 (TGLC…VFLL), and 101 to 121 (LNVA…FWLF). 2 residues coordinate Na(+): Gly75 and Thr78.

This sequence belongs to the fluoride channel Fluc/FEX (TC 1.A.43) family.

The protein localises to the cell inner membrane. The catalysed reaction is fluoride(in) = fluoride(out). With respect to regulation, na(+) is not transported, but it plays an essential structural role and its presence is essential for fluoride channel function. Fluoride-specific ion channel. Important for reducing fluoride concentration in the cell, thus reducing its toxicity. In Cronobacter sakazakii (strain ATCC BAA-894) (Enterobacter sakazakii), this protein is Fluoride-specific ion channel FluC.